The primary structure comprises 263 residues: MAPK-interacting and spindle-stabilizing protein (263 aa).

The tract at residues 13-238 (GSPAPFLPSG…LGKQQGHNTT (226 aa)) is disordered. 2 stretches are compositionally biased toward pro residues: residues 14 to 34 (SPAP…PYPG) and 140 to 155 (GLQP…PPGP). The segment covering 156–165 (SAASPGPGSL) has biased composition (low complexity). Over residues 176–189 (PSDSSNPESTLEST) the composition is skewed to polar residues. The segment covering 202–213 (IKRRRSKKKSKR) has biased composition (basic residues).

Belongs to the MISS family. In terms of assembly, interacts with MAPK1. Post-translationally, phosphorylated in vitro by MAPK1.

It localises to the cytoplasm. It is found in the cytoskeleton. The protein localises to the spindle. Its function is as follows. Involved in the maintenance of the spindle integrity during the cytostatic factor (CSF) arrest of oocytes. The chain is MAPK-interacting and spindle-stabilizing protein (Mapk1ip1) from Mus musculus (Mouse).